A 229-amino-acid polypeptide reads, in one-letter code: Potassium/proton antiporter CemA (229 aa).

Transmembrane regions (helical) follow at residues 7-27 (FTPL…SLLF), 107-127 (ILHF…SIFG), and 189-209 (IISG…KYWI).

Belongs to the CemA family.

Its subcellular location is the plastid. The protein localises to the chloroplast inner membrane. The catalysed reaction is K(+)(in) + H(+)(out) = K(+)(out) + H(+)(in). Its function is as follows. Contributes to K(+)/H(+) antiport activity by supporting proton efflux to control proton extrusion and homeostasis in chloroplasts in a light-dependent manner to modulate photosynthesis. Prevents excessive induction of non-photochemical quenching (NPQ) under continuous-light conditions. Indirectly promotes efficient inorganic carbon uptake into chloroplasts. This chain is Potassium/proton antiporter CemA, found in Guizotia abyssinica (Niger).